We begin with the raw amino-acid sequence, 293 residues long: Glycine--tRNA ligase alpha subunit (293 aa).

Belongs to the class-II aminoacyl-tRNA synthetase family. In terms of assembly, tetramer of two alpha and two beta subunits.

Its subcellular location is the cytoplasm. It catalyses the reaction tRNA(Gly) + glycine + ATP = glycyl-tRNA(Gly) + AMP + diphosphate. The sequence is that of Glycine--tRNA ligase alpha subunit from Sulfurimonas denitrificans (strain ATCC 33889 / DSM 1251) (Thiomicrospira denitrificans (strain ATCC 33889 / DSM 1251)).